We begin with the raw amino-acid sequence, 370 residues long: DNA replication and repair protein RecF (370 aa).

30-37 is a binding site for ATP; it reads GPNGSGKT.

Belongs to the RecF family.

It localises to the cytoplasm. Its function is as follows. The RecF protein is involved in DNA metabolism; it is required for DNA replication and normal SOS inducibility. RecF binds preferentially to single-stranded, linear DNA. It also seems to bind ATP. This chain is DNA replication and repair protein RecF, found in Prosthecochloris aestuarii (strain DSM 271 / SK 413).